The chain runs to 167 residues: Ribonuclease P protein subunit p20 (167 aa).

Residues Met1 to Val36 are disordered. Residues Lys12 to Pro31 show a composition bias toward basic residues.

As to quaternary structure, interacts with Smn.

It localises to the nucleus. The protein localises to the nucleolus. The protein resides in the cytoplasm. Its subcellular location is the cytoplasmic granule. In terms of biological role, component of ribonuclease P, a protein complex that generates mature tRNA molecules by cleaving their 5'-ends. Also a component of RNase MRP complex, which cleaves pre-rRNA sequences. The polypeptide is Ribonuclease P protein subunit p20 (Drosophila melanogaster (Fruit fly)).